The primary structure comprises 417 residues: UDP-N-acetylglucosamine 1-carboxyvinyltransferase (417 aa).

22-23 contributes to the phosphoenolpyruvate binding site; the sequence is KN. Residue Arg-92 participates in UDP-N-acetyl-alpha-D-glucosamine binding. Cys-116 (proton donor) is an active-site residue. Cys-116 is modified (2-(S-cysteinyl)pyruvic acid O-phosphothioketal). Positions 304 and 326 each coordinate UDP-N-acetyl-alpha-D-glucosamine.

This sequence belongs to the EPSP synthase family. MurA subfamily.

It is found in the cytoplasm. The enzyme catalyses phosphoenolpyruvate + UDP-N-acetyl-alpha-D-glucosamine = UDP-N-acetyl-3-O-(1-carboxyvinyl)-alpha-D-glucosamine + phosphate. It participates in cell wall biogenesis; peptidoglycan biosynthesis. In terms of biological role, cell wall formation. Adds enolpyruvyl to UDP-N-acetylglucosamine. The protein is UDP-N-acetylglucosamine 1-carboxyvinyltransferase of Geobacter metallireducens (strain ATCC 53774 / DSM 7210 / GS-15).